Here is a 645-residue protein sequence, read N- to C-terminus: UvrABC system protein B (645 aa).

The Helicase ATP-binding domain maps to 24-414; the sequence is AGLNDNKRDQ…LFVEQVIRPT (391 aa). 37 to 44 serves as a coordination point for ATP; the sequence is GVTGSGKT. The Beta-hairpin motif lies at 90–113; that stretch reads YYDYYQPEAYLPQTDTYIEKDSVI. The 166-residue stretch at 426–591 folds into the Helicase C-terminal domain; it reads AEAQVYDVVH…VLPKTIIKPI (166 aa). One can recognise a UVR domain in the interval 610-645; the sequence is KDTVSSLRKQMLAHAKNLEFEEAAKIKNIIGRINNL.

The protein belongs to the UvrB family. As to quaternary structure, forms a heterotetramer with UvrA during the search for lesions. Interacts with UvrC in an incision complex.

It localises to the cytoplasm. Functionally, the UvrABC repair system catalyzes the recognition and processing of DNA lesions. A damage recognition complex composed of 2 UvrA and 2 UvrB subunits scans DNA for abnormalities. Upon binding of the UvrA(2)B(2) complex to a putative damaged site, the DNA wraps around one UvrB monomer. DNA wrap is dependent on ATP binding by UvrB and probably causes local melting of the DNA helix, facilitating insertion of UvrB beta-hairpin between the DNA strands. Then UvrB probes one DNA strand for the presence of a lesion. If a lesion is found the UvrA subunits dissociate and the UvrB-DNA preincision complex is formed. This complex is subsequently bound by UvrC and the second UvrB is released. If no lesion is found, the DNA wraps around the other UvrB subunit that will check the other stand for damage. In Wolbachia sp. subsp. Brugia malayi (strain TRS), this protein is UvrABC system protein B.